The following is a 428-amino-acid chain: Spermidine/putrescine import ATP-binding protein PotA (428 aa).

The ABC transporter domain maps to 6 to 238 (IEFKNVSKTY…PINHFVADFI (233 aa)). 40 to 47 (GASGSGKS) serves as a coordination point for ATP.

It belongs to the ABC transporter superfamily. Spermidine/putrescine importer (TC 3.A.1.11.1) family. As to quaternary structure, the complex is composed of two ATP-binding proteins (PotA), two transmembrane proteins (PotB and PotC) and a solute-binding protein (PotD).

The protein resides in the cell membrane. The enzyme catalyses ATP + H2O + polyamine-[polyamine-binding protein]Side 1 = ADP + phosphate + polyamineSide 2 + [polyamine-binding protein]Side 1.. Functionally, part of the ABC transporter complex PotABCD involved in spermidine/putrescine import. Responsible for energy coupling to the transport system. The protein is Spermidine/putrescine import ATP-binding protein PotA of Lactococcus lactis subsp. lactis (strain IL1403) (Streptococcus lactis).